The following is a 480-amino-acid chain: Glutamyl-tRNA(Gln) amidotransferase subunit A (480 aa).

Active-site charge relay system residues include lysine 70 and serine 145. Catalysis depends on serine 169, which acts as the Acyl-ester intermediate.

Belongs to the amidase family. GatA subfamily. As to quaternary structure, heterotrimer of A, B and C subunits.

The catalysed reaction is L-glutamyl-tRNA(Gln) + L-glutamine + ATP + H2O = L-glutaminyl-tRNA(Gln) + L-glutamate + ADP + phosphate + H(+). In terms of biological role, allows the formation of correctly charged Gln-tRNA(Gln) through the transamidation of misacylated Glu-tRNA(Gln) in organisms which lack glutaminyl-tRNA synthetase. The reaction takes place in the presence of glutamine and ATP through an activated gamma-phospho-Glu-tRNA(Gln). This Lactobacillus delbrueckii subsp. bulgaricus (strain ATCC BAA-365 / Lb-18) protein is Glutamyl-tRNA(Gln) amidotransferase subunit A.